Reading from the N-terminus, the 1168-residue chain is Transcription-repair-coupling factor (1168 aa).

The region spanning 633–794 is the Helicase ATP-binding domain; it reads DMQKSRPMDR…MLGVRDLSVI (162 aa). 646–653 is a binding site for ATP; the sequence is GDVGYGKT. The DEEQ box motif lies at 747–750; it reads DEEQ. A Helicase C-terminal domain is found at 808–969; it reads VLEQNMSFIK…GFKIAMRDLN (162 aa).

This sequence in the N-terminal section; belongs to the UvrB family. It in the C-terminal section; belongs to the helicase family. RecG subfamily.

The protein localises to the cytoplasm. In terms of biological role, couples transcription and DNA repair by recognizing RNA polymerase (RNAP) stalled at DNA lesions. Mediates ATP-dependent release of RNAP and its truncated transcript from the DNA, and recruitment of nucleotide excision repair machinery to the damaged site. The chain is Transcription-repair-coupling factor from Staphylococcus aureus (strain bovine RF122 / ET3-1).